Consider the following 218-residue polypeptide: Phosphatidylserine decarboxylase proenzyme (218 aa).

The Schiff-base intermediate with substrate; via pyruvic acid role is filled by S187. Residue S187 is modified to Pyruvic acid (Ser); by autocatalysis.

It belongs to the phosphatidylserine decarboxylase family. PSD-A subfamily. Heterodimer of a large membrane-associated beta subunit and a small pyruvoyl-containing alpha subunit. The cofactor is pyruvate. In terms of processing, is synthesized initially as an inactive proenzyme. Formation of the active enzyme involves a self-maturation process in which the active site pyruvoyl group is generated from an internal serine residue via an autocatalytic post-translational modification. Two non-identical subunits are generated from the proenzyme in this reaction, and the pyruvate is formed at the N-terminus of the alpha chain, which is derived from the carboxyl end of the proenzyme. The post-translation cleavage follows an unusual pathway, termed non-hydrolytic serinolysis, in which the side chain hydroxyl group of the serine supplies its oxygen atom to form the C-terminus of the beta chain, while the remainder of the serine residue undergoes an oxidative deamination to produce ammonia and the pyruvoyl prosthetic group on the alpha chain.

Its subcellular location is the cell membrane. It carries out the reaction a 1,2-diacyl-sn-glycero-3-phospho-L-serine + H(+) = a 1,2-diacyl-sn-glycero-3-phosphoethanolamine + CO2. Its pathway is phospholipid metabolism; phosphatidylethanolamine biosynthesis; phosphatidylethanolamine from CDP-diacylglycerol: step 2/2. Its function is as follows. Catalyzes the formation of phosphatidylethanolamine (PtdEtn) from phosphatidylserine (PtdSer). This is Phosphatidylserine decarboxylase proenzyme from Geobacter sulfurreducens (strain ATCC 51573 / DSM 12127 / PCA).